Reading from the N-terminus, the 269-residue chain is Meiotic drive suppressor wtf5 (269 aa).

The segment at 1–67 is disordered; the sequence is MKNNHTSLKS…HRENHSYRTT (67 aa). Positions 19–30 are enriched in basic and acidic residues; sequence KTDHEIDLEKGP. Transmembrane regions (helical) follow at residues 73–93, 110–130, 140–160, 174–194, and 216–236; these read LLIK…PAVC, WTLF…LTYF, VTVI…AQCV, WENM…VGSP, and IIFV…PGSI.

The protein belongs to the WTF family. In terms of assembly, homomer. Interacts with other proteins that exhibit high sequence similarity.

It localises to the spore membrane. Its subcellular location is the vacuole membrane. Functionally, acts as a suppressor component of the dual wtf meiotic drive system, and can suppress but not confer meiotic drive by compatible poisons. Wtf meiotic drive systems promote unequal transmission of alleles from the parental zygote to progeny spores by encoding a poison and an antidote from the same locus; the poison is trans-acting and forms toxic aggregates in all spores within an ascus, wherease the antidote is spore-specific and targets aggregates for degradation by the vacuole. Meiotic drive by wtf systems therefore lead to poisoning of all progeny that do not inherit the dual poison/antidote allele, or express a compatible antidote. The polypeptide is Meiotic drive suppressor wtf5 (Schizosaccharomyces kambucha (Fission yeast)).